A 141-amino-acid chain; its full sequence is Large ribosomal subunit protein uL11 (141 aa).

This sequence belongs to the universal ribosomal protein uL11 family. Part of the ribosomal stalk of the 50S ribosomal subunit. Interacts with L10 and the large rRNA to form the base of the stalk. L10 forms an elongated spine to which L12 dimers bind in a sequential fashion forming a multimeric L10(L12)X complex. In terms of processing, one or more lysine residues are methylated.

Forms part of the ribosomal stalk which helps the ribosome interact with GTP-bound translation factors. This Chloroflexus aggregans (strain MD-66 / DSM 9485) protein is Large ribosomal subunit protein uL11.